The chain runs to 152 residues: Prostaglandin E synthase (152 aa).

Over 1–12 the chain is Lumenal; the sequence is MPAHSLAMSSPA. Residues 13–41 traverse the membrane as a helical segment; the sequence is LPAFLLCSTLLVIKMYVVAIITGQVRLRK. Arg38 contributes to the glutathione binding site. Residues 42–60 are Cytoplasmic-facing; that stretch reads KAFANPEDALRHGGPQYCR. The helical transmembrane segment at 61–90 threads the bilayer; it reads SDPDVERCLRAHRNDMETIYPFLFLGFVYS. 73-77 contacts glutathione; that stretch reads RNDME. Topologically, residues 91 to 95 are lumenal; sequence FLGPN. Residues 96 to 119 traverse the membrane as a helical segment; that stretch reads PFVAWMHFLVFLLGRVVHTVAYLG. Glutathione-binding residues include His113 and Tyr117. At 120–123 the chain is on the cytoplasmic side; it reads KLRA. The chain crosses the membrane as a helical span at residues 124–152; the sequence is PIRSVTYTLAQLPCASMALQILWEAARHL. 126 to 130 contacts glutathione; that stretch reads RSVTY.

Belongs to the MAPEG family. As to quaternary structure, homotrimer. Glutathione serves as cofactor.

It is found in the membrane. It localises to the cytoplasm. The protein resides in the perinuclear region. The enzyme catalyses prostaglandin H2 = prostaglandin E2. It catalyses the reaction 2-glyceryl-prostaglandin H2 = 2-glyceryl-prostaglandin E2. The catalysed reaction is prostaglandin G2 = (15S)-15-hydroperoxy-prostaglandin E2. It carries out the reaction 1-chloro-2,4-dinitrobenzene + glutathione = 2,4-dinitrophenyl-S-glutathione + chloride + H(+). The enzyme catalyses (5S)-hydroperoxy-(6E,8Z,11Z,14Z)-eicosatetraenoate + 2 glutathione = (5S)-hydroxy-(6E,8Z,11Z,14Z)-eicosatetraenoate + glutathione disulfide + H2O. It functions in the pathway lipid metabolism; prostaglandin biosynthesis. Its function is as follows. Terminal enzyme of the cyclooxygenase (COX)-2-mediated prostaglandin E2 (PGE2) biosynthetic pathway. Catalyzes the glutathione-dependent oxidoreduction of prostaglandin endoperoxide H2 (PGH2) to prostaglandin E2 (PGE2) in response to inflammatory stimuli. Plays a key role in inflammation response, fever and pain. Also catalyzes the oxidoreduction of endocannabinoids into prostaglandin glycerol esters and PGG2 into 15-hydroperoxy-PGE2. In addition, displays low glutathione transferase and glutathione-dependent peroxidase activities, toward 1-chloro-2,4-dinitrobenzene and 5-hydroperoxyicosatetraenoic acid (5-HPETE), respectively. The sequence is that of Prostaglandin E synthase (PTGES) from Macaca fascicularis (Crab-eating macaque).